A 139-amino-acid chain; its full sequence is D-ribose pyranase (139 aa).

Histidine 20 (proton donor) is an active-site residue. Substrate contacts are provided by residues aspartate 28, histidine 106, and 128 to 130; that span reads YAN.

This sequence belongs to the RbsD / FucU family. RbsD subfamily. Homodecamer.

The protein localises to the cytoplasm. The enzyme catalyses beta-D-ribopyranose = beta-D-ribofuranose. It participates in carbohydrate metabolism; D-ribose degradation; D-ribose 5-phosphate from beta-D-ribopyranose: step 1/2. In terms of biological role, catalyzes the interconversion of beta-pyran and beta-furan forms of D-ribose. The sequence is that of D-ribose pyranase from Vibrio vulnificus (strain CMCP6).